Here is a 138-residue protein sequence, read N- to C-terminus: Cysteine desulfuration protein SufE (138 aa).

Catalysis depends on Cys-51, which acts as the Cysteine persulfide intermediate.

Belongs to the SufE family. As to quaternary structure, homodimer. Interacts with SufS.

The protein localises to the cytoplasm. It functions in the pathway cofactor biosynthesis; iron-sulfur cluster biosynthesis. In terms of biological role, participates in cysteine desulfuration mediated by SufS. Cysteine desulfuration mobilizes sulfur from L-cysteine to yield L-alanine and constitutes an essential step in sulfur metabolism for biosynthesis of a variety of sulfur-containing biomolecules. Functions as a sulfur acceptor for SufS, by mediating the direct transfer of the sulfur atom from the S-sulfanylcysteine of SufS, an intermediate product of cysteine desulfuration process. This Klebsiella pneumoniae subsp. pneumoniae (strain ATCC 700721 / MGH 78578) protein is Cysteine desulfuration protein SufE.